The primary structure comprises 151 residues: D-aminoacyl-tRNA deacylase (151 aa).

The Gly-cisPro motif, important for rejection of L-amino acids motif lies at 137-138; sequence GP.

The protein belongs to the DTD family. Homodimer.

It localises to the cytoplasm. It catalyses the reaction glycyl-tRNA(Ala) + H2O = tRNA(Ala) + glycine + H(+). The catalysed reaction is a D-aminoacyl-tRNA + H2O = a tRNA + a D-alpha-amino acid + H(+). An aminoacyl-tRNA editing enzyme that deacylates mischarged D-aminoacyl-tRNAs. Also deacylates mischarged glycyl-tRNA(Ala), protecting cells against glycine mischarging by AlaRS. Acts via tRNA-based rather than protein-based catalysis; rejects L-amino acids rather than detecting D-amino acids in the active site. By recycling D-aminoacyl-tRNA to D-amino acids and free tRNA molecules, this enzyme counteracts the toxicity associated with the formation of D-aminoacyl-tRNA entities in vivo and helps enforce protein L-homochirality. This is D-aminoacyl-tRNA deacylase from Protochlamydia amoebophila (strain UWE25).